Consider the following 422-residue polypeptide: 3-isopropylmalate dehydratase large subunit (422 aa).

Positions 303, 363, and 366 each coordinate [4Fe-4S] cluster.

The protein belongs to the aconitase/IPM isomerase family. LeuC type 2 subfamily. Heterodimer of LeuC and LeuD. Requires [4Fe-4S] cluster as cofactor.

It carries out the reaction (2R,3S)-3-isopropylmalate = (2S)-2-isopropylmalate. It participates in amino-acid biosynthesis; L-leucine biosynthesis; L-leucine from 3-methyl-2-oxobutanoate: step 2/4. Catalyzes the isomerization between 2-isopropylmalate and 3-isopropylmalate, via the formation of 2-isopropylmaleate. The sequence is that of 3-isopropylmalate dehydratase large subunit from Wolinella succinogenes (strain ATCC 29543 / DSM 1740 / CCUG 13145 / JCM 31913 / LMG 7466 / NCTC 11488 / FDC 602W) (Vibrio succinogenes).